We begin with the raw amino-acid sequence, 522 residues long: Bifunctional purine biosynthesis protein PurH (522 aa).

An MGS-like domain is found at 1-143; it reads MIRRALISVS…KNHARVAVVV (143 aa).

It belongs to the PurH family.

The enzyme catalyses (6R)-10-formyltetrahydrofolate + 5-amino-1-(5-phospho-beta-D-ribosyl)imidazole-4-carboxamide = 5-formamido-1-(5-phospho-D-ribosyl)imidazole-4-carboxamide + (6S)-5,6,7,8-tetrahydrofolate. It catalyses the reaction IMP + H2O = 5-formamido-1-(5-phospho-D-ribosyl)imidazole-4-carboxamide. The protein operates within purine metabolism; IMP biosynthesis via de novo pathway; 5-formamido-1-(5-phospho-D-ribosyl)imidazole-4-carboxamide from 5-amino-1-(5-phospho-D-ribosyl)imidazole-4-carboxamide (10-formyl THF route): step 1/1. Its pathway is purine metabolism; IMP biosynthesis via de novo pathway; IMP from 5-formamido-1-(5-phospho-D-ribosyl)imidazole-4-carboxamide: step 1/1. This Sorangium cellulosum (strain So ce56) (Polyangium cellulosum (strain So ce56)) protein is Bifunctional purine biosynthesis protein PurH.